The sequence spans 465 residues: tRNA modification GTPase MnmE (465 aa).

(6S)-5-formyl-5,6,7,8-tetrahydrofolate is bound by residues Arg24, Glu84, and Lys127. In terms of domain architecture, TrmE-type G spans 223 to 383; sequence GLNIVLAGQP…LRGELLRLIG (161 aa). Asn233 contacts K(+). GTP-binding positions include 233–238, 252–258, and 277–280; these read NVGKSS, TAIAGTT, and DTAG. Ser237 contributes to the Mg(2+) binding site. K(+) contacts are provided by Thr252, Ile254, and Thr257. Residue Thr258 participates in Mg(2+) binding. (6S)-5-formyl-5,6,7,8-tetrahydrofolate is bound at residue Lys465.

The protein belongs to the TRAFAC class TrmE-Era-EngA-EngB-Septin-like GTPase superfamily. TrmE GTPase family. Homodimer. Heterotetramer of two MnmE and two MnmG subunits. K(+) is required as a cofactor.

It is found in the cytoplasm. In terms of biological role, exhibits a very high intrinsic GTPase hydrolysis rate. Involved in the addition of a carboxymethylaminomethyl (cmnm) group at the wobble position (U34) of certain tRNAs, forming tRNA-cmnm(5)s(2)U34. The protein is tRNA modification GTPase MnmE of Janthinobacterium sp. (strain Marseille) (Minibacterium massiliensis).